Consider the following 327-residue polypeptide: MSENTRKVTVAVIGSGNIGTDLMIKVIRHSEVLQMGAMVGIDPDSDGLARARRLGVPTTSDGVQGLLQLPNFDEIDVIFDATSAKAHEANAALLEPLGKRLIDLTPAALGPFVVPAVNLDEHRDAANVNMVTCGGQATIPIVAAVSRVTPVAYAEIVASIASKSAGPGTRANIDEFTETTSHAIETVGGARRGKAIIILNPADPPLIMRDTVLCLISAPDPATHDAIRDSIQTMVDHVATYVPGYRLKQQVQITPVPDGQPVRTLLASGDAATPTHQVSVFLEVEGAAHYLPAYAGNLDIMTSAAVRYAESVADTIAAPTAAQGATR.

15–18 (SGNI) contacts NAD(+). Catalysis depends on cysteine 133, which acts as the Acyl-thioester intermediate. Residues 164–172 (SAGPGTRAN) and asparagine 297 contribute to the NAD(+) site.

Belongs to the acetaldehyde dehydrogenase family.

It catalyses the reaction acetaldehyde + NAD(+) + CoA = acetyl-CoA + NADH + H(+). This Rhodococcus jostii (strain RHA1) protein is Acetaldehyde dehydrogenase 5.